The primary structure comprises 717 residues: MSSAPPPGGTPSPPPQPLPIPPPPQPLPVTPPPPPTALPPALPPPPPPTALPPALPPPPPPTTVPPIPPSTPSPPPPLTPSPLPPSPTTPSPPLTPSPTTPSPPLTPSPPPAITPSPPLTPSPLPPSPTTPSPPPPSPSIPSPPLTPSPPPSSPLRPSSPPPPSPATPSTPPRSPPPPSTPTPPPRVGSLSPPPPASPSGGRSPSTPSTTPGSSPPAQSSKELSKGAMVGIAIGGGFVLLVALALIFFLCKKKRRRDNEAPPAPIDGVPYGGQQQQNASRRSDHVVMSVPPPKSPSSAPPRPPHFMSSGSSGDYDSNYSDQSVLPPPSPGLALGLGIYQGTFNYEELSRATNGFSEANLLGQGGFGYVFKGMLRNGKEVAVKQLKEGSSQGEREFQAEVGIISRVHHRHLVALVGYCIADAQRLLVYEFVPNNTLEFHLHGKGRPTMEWSSRLKIAVGSAKGLSYLHENCNPKIIHRDIKASNILIDFKFEAKVADFGLAKIASDTNTHVSTRVMGTFGYLAPEYASSGKLTEKSDVFSFGVVLLELITGRRPIDVNNVHADNSLVDWARPLLNQVSELGNFEVVVDKKLNNEYDKEEMARMVACAAACVRSTAPRRPRMDQVARVLEGNISPSDLNQGITPGHSNVYGSSGGSTDYDSSQDNEGMNKFRKVGLETQDLYSNPISEYDLYPSWSSTDGQTTQGKATGNIKRPGQGYG.

Over residues 1–197 (MSSAPPPGGT…GSLSPPPPAS (197 aa)) the composition is skewed to pro residues. A disordered region spans residues 1 to 221 (MSSAPPPGGT…GSSPPAQSSK (221 aa)). Residues 1–228 (MSSAPPPGGT…SSKELSKGAM (228 aa)) are Extracellular-facing. The segment covering 198–220 (PSGGRSPSTPSTTPGSSPPAQSS) has biased composition (low complexity). A helical transmembrane segment spans residues 229–249 (VGIAIGGGFVLLVALALIFFL). Over 250–717 (CKKKRRRDNE…NIKRPGQGYG (468 aa)) the chain is Cytoplasmic. The disordered stretch occupies residues 258–323 (NEAPPAPIDG…YDSNYSDQSV (66 aa)). The span at 289-303 (VPPPKSPSSAPPRPP) shows a compositional bias: pro residues. Residues 307–322 (SSGSSGDYDSNYSDQS) are compositionally biased toward low complexity. The region spanning 354 to 631 (FSEANLLGQG…QVARVLEGNI (278 aa)) is the Protein kinase domain. Residues 360-368 (LGQGGFGYV) and Lys382 contribute to the ATP site. Asp478 (proton acceptor) is an active-site residue. 2 stretches are compositionally biased toward polar residues: residues 632 to 644 (SPSD…TPGH) and 692 to 705 (SWSS…QGKA). Disordered regions lie at residues 632 to 665 (SPSD…DNEG) and 690 to 717 (YPSW…QGYG).

The protein belongs to the protein kinase superfamily. Ser/Thr protein kinase family. As to expression, mostly expressed in inflorescence bolt, flower buds and siliques, and, to a lower extent, in roots, seedlings and leaves.

The protein localises to the cell membrane. It catalyses the reaction L-seryl-[protein] + ATP = O-phospho-L-seryl-[protein] + ADP + H(+). The enzyme catalyses L-threonyl-[protein] + ATP = O-phospho-L-threonyl-[protein] + ADP + H(+). In Arabidopsis thaliana (Mouse-ear cress), this protein is Proline-rich receptor-like protein kinase PERK2 (PERK2).